We begin with the raw amino-acid sequence, 399 residues long: MTKKRHLFTSESVTEGHPDKICDQISDSILDAILSKDANARVACETTVTTGLVLVAGEITTSTYVDIPKIVRETIQGIGYTRAKYGFDAETCAVLTSIDEQSADIAMGVDQALEAREGQMTDAEIEAIGAGDQGLMFGFACNETQELMPLPISLAHKLARRLTEVRKDDTLSYLRPDGKTQVTVEYDENGKPVRVDTIVISTQHHPDVTWEEIDRDLKEHVIKAVVPAELIDGETKFFINPTGRFVIGGPQGDAGLTGRKIIVDTYGGYARHGGGAFSGKDATKVDRSAAYAARYVAKNIVAAGLAEKAEVQLAYAIGVAQPVSISVDTFGTGKVSEDVLVELVRNNFDLRPAGIIKMLDLRRPIYKQTAAYGHFGRTDVDLSWERTDKAAALKEQAGL.

His17 contacts ATP. Asp19 contributes to the Mg(2+) binding site. Glu45 lines the K(+) pocket. Glu58 and Gln101 together coordinate L-methionine. The segment at 101-111 is flexible loop; it reads QSADIAMGVDQ. ATP is bound by residues 177 to 179, 244 to 245, Asp253, 259 to 260, Ala276, and Lys280; these read DGK, RF, and RK. Asp253 lines the L-methionine pocket. Lys284 provides a ligand contact to L-methionine.

The protein belongs to the AdoMet synthase family. In terms of assembly, homotetramer; dimer of dimers. It depends on Mg(2+) as a cofactor. K(+) serves as cofactor.

Its subcellular location is the cytoplasm. The catalysed reaction is L-methionine + ATP + H2O = S-adenosyl-L-methionine + phosphate + diphosphate. It functions in the pathway amino-acid biosynthesis; S-adenosyl-L-methionine biosynthesis; S-adenosyl-L-methionine from L-methionine: step 1/1. Its function is as follows. Catalyzes the formation of S-adenosylmethionine (AdoMet) from methionine and ATP. The overall synthetic reaction is composed of two sequential steps, AdoMet formation and the subsequent tripolyphosphate hydrolysis which occurs prior to release of AdoMet from the enzyme. This Bacillus cereus (strain ATCC 10987 / NRS 248) protein is S-adenosylmethionine synthase.